Consider the following 607-residue polypeptide: Putative pentatricopeptide repeat-containing protein At1g09680 (607 aa).

9 PPR repeats span residues Asn-239–Pro-273, Thr-274–Pro-308, Asp-309–Pro-343, Asn-344–Pro-378, Asp-379–Pro-413, Asp-414–Leu-448, Asp-449–Pro-483, Asp-484–Pro-518, and Ser-519–Pro-553.

Belongs to the PPR family. P subfamily.

This Arabidopsis thaliana (Mouse-ear cress) protein is Putative pentatricopeptide repeat-containing protein At1g09680.